Here is a 451-residue protein sequence, read N- to C-terminus: NAC domain containing protein 52 (451 aa).

A disordered region spans residues 1-21 (MGRESVAVVTAPPSATAPGTA). Positions 27-178 (LAPGFRFHPT…AYVLCRVFHK (152 aa)) constitute an NAC domain. Residues 126–184 (LGMKKTLVFHSGRAPDGLRTNWVMHEYRLVEYETEKNGNLVQDAYVLCRVFHKNNIGPP) mediate DNA binding. Disordered stretches follow at residues 255 to 337 (DQQN…TTTT) and 370 to 400 (KKEK…KVND). The span at 256–270 (QQNHHENDLKPEEHN) shows a compositional bias: basic and acidic residues. The stretch at 272-292 (NNNYDENEETLKREQMEEEER) forms a coiled coil. Residues 318-337 (ESNNNSSRNTQDHCSSTTTT) are compositionally biased toward low complexity. Positions 370-384 (KKEKPQQPLRPHKEP) are enriched in basic and acidic residues. The stretch at 398-446 (VNDLQKEIHQMSVERETFKLEMMSAEAMISILQSRIDALRQENEELKKN) forms a coiled coil.

In terms of assembly, interacts with JMJ14 and NAC050. Mostly expressed in floral organs, and, at low levels, in other organs.

It localises to the nucleus. Transcriptional repressor that binds to the motif 5'-(C/T)A(C/A)G-3' in the promoter of target genes. Also binds to the 5'-CTTGNNNNNCAAG-3' consensus sequence in chromatin. Can bind to the mitochondrial dysfunction motif (MDM) present in the upstream regions of mitochondrial dysfunction stimulon (MDS) genes involved in mitochondrial retrograde regulation (MRR). Together with NAC050 and JMJ14, regulates gene expression and flowering time by associating with the histone demethylase JMJ14, probably by the promotion of RNA-mediated gene silencing. Regulates siRNA-dependent post-transcriptional gene silencing (PTGS) through SGS3 expression modulation. Required during pollen development. This is NAC domain containing protein 52 from Arabidopsis thaliana (Mouse-ear cress).